The primary structure comprises 100 residues: Urease subunit gamma (100 aa).

It belongs to the urease gamma subunit family. In terms of assembly, heterotrimer of UreA (gamma), UreB (beta) and UreC (alpha) subunits. Three heterotrimers associate to form the active enzyme.

It localises to the cytoplasm. The enzyme catalyses urea + 2 H2O + H(+) = hydrogencarbonate + 2 NH4(+). The protein operates within nitrogen metabolism; urea degradation; CO(2) and NH(3) from urea (urease route): step 1/1. The polypeptide is Urease subunit gamma (Mycolicibacterium vanbaalenii (strain DSM 7251 / JCM 13017 / BCRC 16820 / KCTC 9966 / NRRL B-24157 / PYR-1) (Mycobacterium vanbaalenii)).